The following is a 1194-amino-acid chain: ATP-dependent RNA helicase DHX30 (1194 aa).

A compositionally biased stretch (basic and acidic residues) spans 1–10 (MFTLDSFRKD). Residues 1 to 27 (MFTLDSFRKDRTQHRQRQCKLPPPRLP) are disordered. At serine 6 the chain carries Phosphoserine. Positions 53–121 (PKNLLNSVIG…QAAAAACQLF (69 aa)) constitute a DRBM domain. Positions 153-200 (WWRPEPTMPPTSWRQLNPENIRPAGTGGLSRSLGREEEEDEEEELEEG) are disordered. The segment covering 188 to 200 (EEEEDEEEELEEG) has biased composition (acidic residues). Phosphoserine is present on residues serine 226 and serine 380. The 169-residue stretch at 444-612 (LSAIEQHPVV…FGGCPVIKVP (169 aa)) folds into the Helicase ATP-binding domain. 457–464 (GDTGCGKT) serves as a coordination point for ATP. The DEAH box motif lies at 559–562 (DEVH). The region spanning 654-827 (LVTDLVLHID…NLVLQAKIHM (174 aa)) is the Helicase C-terminal domain.

This sequence belongs to the DEAD box helicase family. DEAH subfamily. Identified in a complex with TFAM and SSBP1. Interacts (via N-terminus) with ZC3HAV1 (via N-terminal domain) in an RNA-independent manner. Found in a complex with GRSF1, DDX28, FASTKD2 and FASTKD5.

It localises to the cytoplasm. It is found in the mitochondrion. Its subcellular location is the mitochondrion matrix. The protein resides in the mitochondrion nucleoid. It carries out the reaction ATP + H2O = ADP + phosphate + H(+). RNA-dependent helicase. Plays an important role in the assembly of the mitochondrial large ribosomal subunit. Associates with mitochondrial DNA. Required for optimal function of the zinc-finger antiviral protein ZC3HAV1. Involved in nervous system development and differentiation through its involvement in the up-regulation of a number of genes which are required for neurogenesis, including GSC, NCAM1, neurogenin, and NEUROD. This chain is ATP-dependent RNA helicase DHX30 (Dhx30), found in Rattus norvegicus (Rat).